A 42-amino-acid polypeptide reads, in one-letter code: Histone H1B (42 aa).

Residues 1-42 (TYYELIKAAILALKERNGSSAQAIKKYILENNKIEFQQTFLR) enclose the H15 domain.

The protein belongs to the histone H1/H5 family.

The protein localises to the nucleus. It is found in the chromosome. In terms of biological role, histones H1 are necessary for the condensation of nucleosome chains into higher-order structures. In Olisthodiscus luteus (Marine phytoflagellate), this protein is Histone H1B.